The sequence spans 911 residues: DNA mismatch repair protein MutS (911 aa).

The segment at 1-95 (MALQGNLFGD…PWSHHSQVTP (95 aa)) is disordered. Residues 23–42 (KRQDEPDQLDDHELTQDAKQ) are compositionally biased toward basic and acidic residues. 727 to 734 (GPNASGKS) lines the ATP pocket.

The protein belongs to the DNA mismatch repair MutS family.

This protein is involved in the repair of mismatches in DNA. It is possible that it carries out the mismatch recognition step. This protein has a weak ATPase activity. The chain is DNA mismatch repair protein MutS from Synechococcus sp. (strain CC9311).